The sequence spans 122 residues: MIQMQTVLDVADNSGARKVQCIKVLGGSKRRYASVGDVIKVAVKEAAPRGKVKKGDVFDAVVVRTAQGVRRPDGSKIKFDGNAAVILNTKLEPIGTRIFGPVTRELRNDKFMKIVSLAPEVL.

Belongs to the universal ribosomal protein uL14 family. In terms of assembly, part of the 50S ribosomal subunit. Forms a cluster with proteins L3 and L19. In the 70S ribosome, L14 and L19 interact and together make contacts with the 16S rRNA in bridges B5 and B8.

In terms of biological role, binds to 23S rRNA. Forms part of two intersubunit bridges in the 70S ribosome. This is Large ribosomal subunit protein uL14 from Hydrogenovibrio crunogenus (strain DSM 25203 / XCL-2) (Thiomicrospira crunogena).